The sequence spans 243 residues: Ribonuclease 3 (243 aa).

In terms of domain architecture, RNase III spans 19-144; it reads FNTLHKLLGF…LVGAIYLDRG (126 aa). Residue Glu-61 coordinates Mg(2+). Residue Asp-65 is part of the active site. The Mg(2+) site is built by Asn-130 and Glu-133. Glu-133 is an active-site residue. The 69-residue stretch at 172 to 240 folds into the DRBM domain; sequence SYKSLLIEWC…SKRAYYALQN (69 aa).

It belongs to the ribonuclease III family. Homodimer. It depends on Mg(2+) as a cofactor.

The protein localises to the cytoplasm. It catalyses the reaction Endonucleolytic cleavage to 5'-phosphomonoester.. In terms of biological role, digests double-stranded RNA. Involved in the processing of primary rRNA transcript to yield the immediate precursors to the large and small rRNAs (23S and 16S). Processes some mRNAs, and tRNAs when they are encoded in the rRNA operon. Processes pre-crRNA and tracrRNA of type II CRISPR loci if present in the organism. This Zunongwangia profunda (strain DSM 18752 / CCTCC AB 206139 / SM-A87) (Wangia profunda) protein is Ribonuclease 3 (rnc).